The chain runs to 132 residues: Small ribosomal subunit protein uS8 (132 aa).

The protein belongs to the universal ribosomal protein uS8 family. In terms of assembly, part of the 30S ribosomal subunit. Contacts proteins S5 and S12.

Its function is as follows. One of the primary rRNA binding proteins, it binds directly to 16S rRNA central domain where it helps coordinate assembly of the platform of the 30S subunit. The sequence is that of Small ribosomal subunit protein uS8 from Rickettsia conorii (strain ATCC VR-613 / Malish 7).